The sequence spans 160 residues: Endoribonuclease YbeY (160 aa).

The Zn(2+) site is built by H121, H125, and H131.

Belongs to the endoribonuclease YbeY family. Zn(2+) is required as a cofactor.

The protein resides in the cytoplasm. Functionally, single strand-specific metallo-endoribonuclease involved in late-stage 70S ribosome quality control and in maturation of the 3' terminus of the 16S rRNA. This Syntrophus aciditrophicus (strain SB) protein is Endoribonuclease YbeY.